Here is a 324-residue protein sequence, read N- to C-terminus: [Acyl-carrier-protein] phosphodiesterase PptH (324 aa).

Residues Asp22, His24, and Asp51 each contribute to the Mn(2+) site. The Fe cation site is built by Asp51, Asn79, His205, and His246. His248 contacts Mn(2+).

It belongs to the metallophosphoesterase superfamily. Fe(3+) is required as a cofactor. Requires Mn(2+) as cofactor.

It carries out the reaction holo-[ACP] + H2O = apo-[ACP] + (R)-4'-phosphopantetheine + H(+). In terms of biological role, catalyzes the hydrolysis of the phosphopantetheine group from substrate holo-carrier proteins. This is [Acyl-carrier-protein] phosphodiesterase PptH from Mycobacterium tuberculosis (strain ATCC 25618 / H37Rv).